Here is a 242-residue protein sequence, read N- to C-terminus: N-alpha-acetyltransferase 60 (242 aa).

Residues 1–192 (MSEEERPAAL…GGHPPWTVMD (192 aa)) are Cytoplasmic-facing. An N-acetyltransferase domain is found at 13 to 182 (TILRFLCHDD…DAYTYVLYLN (170 aa)). Tyr38 is a binding site for substrate. Tyr97 is a catalytic residue. Leu99 is a binding site for substrate. Acetyl-CoA is bound by residues 101–103 (LGV) and 109–114 (KQGIGS). His138 is a catalytic residue. Residues Asn143 and 150–153 (YENR) each bind acetyl-CoA. A required for homodimerization region spans residues 162-173 (PYYYSIRGVLQD). Tyr165 lines the substrate pocket. The helical intramembrane region spans 193–236 (YLQHLGSALAGFSPCTLPQRIYRQAHTLLRSLLPWSSISAKSGI). Over 237 to 242 (EYSRTM) the chain is Cytoplasmic.

The protein belongs to the acetyltransferase family. NAA60 subfamily. Monomer and homodimer; monomer in presence of substrate and homodimer in its absence.

It is found in the golgi apparatus membrane. The enzyme catalyses N-terminal L-methionyl-[transmembrane protein] + acetyl-CoA = N-terminal N(alpha)-acetyl-L-methionyl-[transmembrane protein] + CoA + H(+). It catalyses the reaction L-lysyl-[protein] + acetyl-CoA = N(6)-acetyl-L-lysyl-[protein] + CoA + H(+). N-alpha-acetyltransferase that specifically mediates the acetylation of N-terminal residues of the transmembrane proteins, with a strong preference for N-termini facing the cytosol. Displays N-terminal acetyltransferase activity towards a range of N-terminal sequences including those starting with Met-Lys, Met-Val, Met-Ala and Met-Met. Required for normal chromosomal segregation during anaphase. May also show histone acetyltransferase activity; such results are however unclear in vivo and would require additional experimental evidences. The polypeptide is N-alpha-acetyltransferase 60 (naa60) (Xenopus tropicalis (Western clawed frog)).